The following is a 355-amino-acid chain: 3-dehydroquinate synthase (355 aa).

Residues Glu-71–Lys-76, Gly-105–Asp-109, Thr-129–Ser-130, Lys-142, and Lys-151 contribute to the NAD(+) site. Residues Glu-184, His-246, and His-263 each coordinate Zn(2+).

It belongs to the sugar phosphate cyclases superfamily. Dehydroquinate synthase family. It depends on Co(2+) as a cofactor. Zn(2+) serves as cofactor. The cofactor is NAD(+).

The protein localises to the cytoplasm. The catalysed reaction is 7-phospho-2-dehydro-3-deoxy-D-arabino-heptonate = 3-dehydroquinate + phosphate. It participates in metabolic intermediate biosynthesis; chorismate biosynthesis; chorismate from D-erythrose 4-phosphate and phosphoenolpyruvate: step 2/7. Catalyzes the conversion of 3-deoxy-D-arabino-heptulosonate 7-phosphate (DAHP) to dehydroquinate (DHQ). In Streptococcus pneumoniae (strain Hungary19A-6), this protein is 3-dehydroquinate synthase.